The chain runs to 437 residues: Succinyl-CoA:cyclohexane-1-carboxylate CoA transferase (437 aa).

Position 221–225 (221–225 (GWGGI)) interacts with CoA. The active-site 5-glutamyl coenzyme A thioester intermediate is Glu-244. Positions 319, 342, and 367 each coordinate CoA.

This sequence belongs to the acetyl-CoA hydrolase/transferase family. As to quaternary structure, homodimer.

It carries out the reaction cyclohexane-1-carboxylate + succinyl-CoA = cyclohexane-1-carbonyl-CoA + succinate. The catalysed reaction is cyclohexane-1-carboxylate + butanoyl-CoA = cyclohexane-1-carbonyl-CoA + butanoate. Acyl-CoA transferase involved in the anaerobic degradation of cyclohexane carboxylic acid (CHC). Catalyzes the activation of CHC to cyclohexane-1-carbonyl-CoA (CHCoA). Benzoic acid and cyclohex-1-ene-1-carboxylic acid can also be used as substrates, but with lower specific activity. Shows highest activity with succinyl-CoA and butanoyl-coA as a CoA donor, and lower activity with crotonyl-CoA, acetyl-CoA, glutaryl-CoA, CH1eneCoA, propionyl-CoA and acetoacetyl-CoA. In vitro, the enzyme can use butanoyl-coA as a CoA donor with greater efficiency than succinyl-CoA. However, succinyl-CoA is the most abundant CoA ester in exponentially grown cells, whereas butanoyl-coA is hardly detectable, indicating that succinyl-CoA is the natural CoA donor for CHC activation. In Geobacter metallireducens (strain ATCC 53774 / DSM 7210 / GS-15), this protein is Succinyl-CoA:cyclohexane-1-carboxylate CoA transferase.